The primary structure comprises 664 residues: Degenerin del-1 (664 aa).

Over 1 to 67 (MARKYIDILK…IFTTSLYWVR (67 aa)) the chain is Cytoplasmic. A helical membrane pass occupies residues 68-88 (FLWVVVSLVCICLCMYSFSHV). Residues 89-607 (KDKYDRKEKI…WFNLMADMGG (519 aa)) are Extracellular-facing. N-linked (GlcNAc...) asparagine glycosylation is found at asparagine 241, asparagine 300, asparagine 394, asparagine 508, and asparagine 562. A helical membrane pass occupies residues 608–628 (QAGLFLGASIMSVIEFLFFAV). Residues 629-664 (RTLGIACKPRRWRQKTELLRAEELNDAEKGVSTNNN) lie on the Cytoplasmic side of the membrane.

Belongs to the amiloride-sensitive sodium channel (TC 1.A.6) family.

It is found in the membrane. Functionally, probable sodium channel subunit. The polypeptide is Degenerin del-1 (del-1) (Caenorhabditis elegans).